Here is a 229-residue protein sequence, read N- to C-terminus: Transmembrane protein 217 (229 aa).

Residues 13 to 33 traverse the membrane as a helical segment; sequence MGTVLSGVFTIMAVDMYLIFE. Asparagine 39 carries N-linked (GlcNAc...) asparagine glycosylation. 3 helical membrane-spanning segments follow: residues 67–87, 94–114, and 129–149; these read IVLF…YSVY, LVIY…IQIL, and WFGL…VINY. An N-linked (GlcNAc...) asparagine glycan is attached at asparagine 156.

It localises to the membrane. In Homo sapiens (Human), this protein is Transmembrane protein 217 (TMEM217).